A 129-amino-acid polypeptide reads, in one-letter code: Glyoxalase domain-containing protein 5 homolog (129 aa).

The VOC domain maps to Arg-5 to Tyr-128.

It belongs to the glyoxalase I family.

This Dictyostelium discoideum (Social amoeba) protein is Glyoxalase domain-containing protein 5 homolog (glod5).